The primary structure comprises 341 residues: Delta(1)-pyrroline-2-carboxylate reductase (341 aa).

Ser47 serves as the catalytic Charge relay system. His48 functions as the Proton donor in the catalytic mechanism. Arg52 is a substrate binding site. Position 120–124 (120–124 (HFSAL)) interacts with NADP(+). Substrate is bound at residue Thr160. An NADP(+)-binding site is contributed by 178-180 (DFA). Residue 186 to 187 (RG) participates in substrate binding. The active-site Charge relay system is the Glu188. NADP(+) is bound by residues 229-230 (HK) and 305-311 (RLPSERR).

Belongs to the LDH2/MDH2 oxidoreductase family. Homodimer.

It carries out the reaction L-proline + NAD(+) = 1-pyrroline-2-carboxylate + NADH + H(+). The catalysed reaction is L-proline + NADP(+) = 1-pyrroline-2-carboxylate + NADPH + H(+). In terms of biological role, catalyzes the reduction of Delta(1)-pyrroline-2-carboxylate (Pyr2C) to L-proline, using NADPH as the electron donor. Is likely involved in a degradation pathway that converts cis- and trans-3-hydroxy-L-proline (c3LHyp and t3LHyp) to L-proline, which would allow S.novella to grow on c3LHyp or t3LHyp as a sole carbon source. The sequence is that of Delta(1)-pyrroline-2-carboxylate reductase from Ancylobacter novellus (strain ATCC 8093 / DSM 506 / JCM 20403 / CCM 1077 / IAM 12100 / NBRC 12443 / NCIMB 10456) (Starkeya novella).